The sequence spans 292 residues: uncharacterized protein (292 aa).

Positions M1–T59 constitute an HTH lysR-type domain. Positions F18–S37 form a DNA-binding region, H-T-H motif.

This sequence belongs to the LysR transcriptional regulatory family.

This is an uncharacterized protein from Bacillus subtilis (strain 168).